The primary structure comprises 68 residues: Peptide Hp1090 (68 aa).

Residues 1–23 (MKTQFAIFLITLVLFQMFSQSDA) form the signal peptide. At F36 the chain carries Phenylalanine amide. Residues 40–68 (GLSDLDDLDESFDGEVSQADIDFLKELMQ) constitute a propeptide that is removed on maturation.

Belongs to the non-disulfide-bridged peptide (NDBP) superfamily. Short antimicrobial peptide (group 4) family. In terms of tissue distribution, expressed by the venom gland.

It localises to the secreted. The protein localises to the target cell membrane. Amphipathic peptide which inhibits the growth of Gram-positive bacteria. This is Peptide Hp1090 from Heterometrus petersii (Asian forest scorpion).